The sequence spans 313 residues: Probable cell division protein WhiA (313 aa).

A DNA-binding region (H-T-H motif) is located at residues 277 to 311; the sequence is SLKEVAAQVPDGPISKSGVNHRFQKIREMAQQLKE.

The protein belongs to the WhiA family.

In terms of biological role, involved in cell division and chromosome segregation. This chain is Probable cell division protein WhiA, found in Lactobacillus gasseri (strain ATCC 33323 / DSM 20243 / BCRC 14619 / CIP 102991 / JCM 1131 / KCTC 3163 / NCIMB 11718 / NCTC 13722 / AM63).